The sequence spans 484 residues: Schwannomin-interacting protein 1 (484 aa).

The span at 1 to 28 (MERSEQRVRAAWDCDPGKQADRDYREDG) shows a compositional bias: basic and acidic residues. Disordered stretches follow at residues 1-74 (MERS…VSAL), 86-220 (KKVI…PPMD), 232-258 (QFRE…ERES), and 305-350 (SGSD…ESLD). The span at 33-67 (SDAGSSSSSRASSQSNSTKVTPCSECKSSSSPGGS) shows a compositional bias: low complexity. A compositionally biased stretch (acidic residues) spans 92 to 106 (WAPEEDGEEEEEEDD). Residues 107 to 120 (RGYRDDGCPAREPG) show a composition bias toward basic and acidic residues. The segment covering 123 to 137 (SARIGSSGSGSRSAA) has biased composition (low complexity). The segment covering 150–159 (HPHDPQDLRH) has biased composition (basic and acidic residues). Positions 239 to 252 (RNQGQARTNSTSAQ) are enriched in polar residues. Residues 306 to 320 (GSDKDSDADDSKTET) are compositionally biased toward basic and acidic residues. Positions 321 to 332 (SLDTPLSPMSKQ) are enriched in polar residues. Acidic residues predominate over residues 341–350 (TTEEESESLD). Residues 421–455 (IGQLQVIVNDLHSQIESLNEELVQLLLIRDELHTE) adopt a coiled-coil conformation.

It belongs to the SCHIP1 family. In terms of assembly, homooligomer (via coiled coil domain). Interacts with NF2; the interaction is direct. Interacts with ANK3.

The sequence is that of Schwannomin-interacting protein 1 from Mus musculus (Mouse).